A 352-amino-acid chain; its full sequence is Phosphoribosylformylglycinamidine cyclo-ligase (352 aa).

Belongs to the AIR synthase family.

It is found in the cytoplasm. It catalyses the reaction 2-formamido-N(1)-(5-O-phospho-beta-D-ribosyl)acetamidine + ATP = 5-amino-1-(5-phospho-beta-D-ribosyl)imidazole + ADP + phosphate + H(+). The protein operates within purine metabolism; IMP biosynthesis via de novo pathway; 5-amino-1-(5-phospho-D-ribosyl)imidazole from N(2)-formyl-N(1)-(5-phospho-D-ribosyl)glycinamide: step 2/2. In Pseudomonas savastanoi pv. phaseolicola (strain 1448A / Race 6) (Pseudomonas syringae pv. phaseolicola (strain 1448A / Race 6)), this protein is Phosphoribosylformylglycinamidine cyclo-ligase.